The chain runs to 296 residues: ATP synthase gamma chain (296 aa).

The protein belongs to the ATPase gamma chain family. As to quaternary structure, F-type ATPases have 2 components, CF(1) - the catalytic core - and CF(0) - the membrane proton channel. CF(1) has five subunits: alpha(3), beta(3), gamma(1), delta(1), epsilon(1). CF(0) has three main subunits: a, b and c.

It is found in the cell inner membrane. Its function is as follows. Produces ATP from ADP in the presence of a proton gradient across the membrane. The gamma chain is believed to be important in regulating ATPase activity and the flow of protons through the CF(0) complex. This chain is ATP synthase gamma chain, found in Methylorubrum extorquens (strain CM4 / NCIMB 13688) (Methylobacterium extorquens).